Here is a 678-residue protein sequence, read N- to C-terminus: MSKRNPPVTNIADLVSDSSLDEDSLSFLEELQDPELYFKNDTFSSKSSHSDGTVTGDTLRRQSSGATALERLVSHPRTKNFDLQGNGGQNSALKEVNTPAYQSMHHFEHLITPLPSTNASHSEVSLSAGVNDLNSNSEHDLLPKSVNKTPGSLSISRRRRIGRIGLGPPKRAEYTLTDPSKTSDTKNSTEADEDIEMKSREVSPASNSVAATTLKPLQLHNTPLQTSQEHPKPSFHPSQFESSFSPRVQFDHDVERRASELHSRPVTVFQEPQRSASQPYESHALSPKVAPLFDNSQATPIPKRQQDVVTVANLQFIKLGVVGKGGSSMVYRIFSPDNSRLYALKEVNFINADQTTIQGYKNEIALLRKLSGNDRIIKLYAAEVNDTLGQLNMVMECGETDLANLLMKNMKKPINLNFIRMYWEQMLEAVQVVHDQNIVHSDLKPANFLLVEGNLKLIDFGIAKAIGNDTTNIHRDSHIGTINYMAPEALTDMNAHTNSGVKLVKLGRPSDVWSLGCILYQMVYGRAPFAHLKMIQAIAAIPNEQYHIHFPEVALPANAVQEKEGSLPGVTVGPDLMDVMKRCLERDQRKRLTIPELLVHPFLNPLPSYLTPLAKKPLPVSGHTNNAHPLRLSTEISASQLSMIIERSVELSKHKRLNKELIDSMAYDCVSNLRKMPE.

2 disordered regions span residues 39 to 93 (KNDT…NSAL) and 114 to 209 (LPST…SNSV). 2 stretches are compositionally biased toward polar residues: residues 41 to 66 (DTFSSKSSHSDGTVTGDTLRRQSSGA) and 114 to 125 (LPSTNASHSEVS). The Protein kinase domain maps to 316-607 (FIKLGVVGKG…LVHPFLNPLP (292 aa)). Residues 322-330 (VGKGGSSMV) and Lys-345 each bind ATP. Asp-442 serves as the catalytic Proton acceptor.

The protein belongs to the protein kinase superfamily. Ser/Thr protein kinase family.

It carries out the reaction L-seryl-[protein] + ATP = O-phospho-L-seryl-[protein] + ADP + H(+). The enzyme catalyses L-threonyl-[protein] + ATP = O-phospho-L-threonyl-[protein] + ADP + H(+). The catalysed reaction is L-tyrosyl-[protein] + ATP = O-phospho-L-tyrosyl-[protein] + ADP + H(+). Its function is as follows. Involved in mitotic spindle assembly checkpoint signaling, a process that delays anaphase until chromosomes are bioriented on the spindle, and in the repair of incorrect mitotic kinetochore-spindle microtubule attachments. Phosphorylates spc7/knl1 on MELT motifs; phosphorylation is required for recruitment of the BUB1-BUB3 complex to kinetochores. This is Serine/threonine-protein kinase mph1 from Schizosaccharomyces pombe (strain 972 / ATCC 24843) (Fission yeast).